A 492-amino-acid polypeptide reads, in one-letter code: Catalase isozyme 1 (492 aa).

Catalysis depends on residues His-65 and Asn-138. A heme-binding site is contributed by Tyr-348.

It belongs to the catalase family. Homotetramer. Requires heme as cofactor.

It localises to the peroxisome. The enzyme catalyses 2 H2O2 = O2 + 2 H2O. Functionally, occurs in almost all aerobically respiring organisms and serves to protect cells from the toxic effects of hydrogen peroxide. The protein is Catalase isozyme 1 (CAT1) of Solanum lycopersicum (Tomato).